A 224-amino-acid chain; its full sequence is UPF0758 protein VIBHAR_00653 (224 aa).

Residues 102 to 224 form the MPN domain; that stretch reads ALTSPEQTKL…SVSFAERGWI (123 aa). The Zn(2+) site is built by H173, H175, and D186. A JAMM motif motif is present at residues 173–186; the sequence is HNHPSGVAEPSQAD.

The protein belongs to the UPF0758 family.

In Vibrio campbellii (strain ATCC BAA-1116), this protein is UPF0758 protein VIBHAR_00653.